A 438-amino-acid chain; its full sequence is Gamma-glutamyl phosphate reductase (438 aa).

Belongs to the gamma-glutamyl phosphate reductase family.

The protein resides in the cytoplasm. It catalyses the reaction L-glutamate 5-semialdehyde + phosphate + NADP(+) = L-glutamyl 5-phosphate + NADPH + H(+). The protein operates within amino-acid biosynthesis; L-proline biosynthesis; L-glutamate 5-semialdehyde from L-glutamate: step 2/2. Catalyzes the NADPH-dependent reduction of L-glutamate 5-phosphate into L-glutamate 5-semialdehyde and phosphate. The product spontaneously undergoes cyclization to form 1-pyrroline-5-carboxylate. In Natronomonas pharaonis (strain ATCC 35678 / DSM 2160 / CIP 103997 / JCM 8858 / NBRC 14720 / NCIMB 2260 / Gabara) (Halobacterium pharaonis), this protein is Gamma-glutamyl phosphate reductase.